Here is a 175-residue protein sequence, read N- to C-terminus: MKLLILDRDGVINYDSDAYIKTLEEWVPIPGSVDAIAQLSKAGWTVAVATNQSGIARGYYPLATLEAMHARLRALVAEQGGEVGHIVYCPHGPDEGCDCRKPKPGMLRAIAEHYQIGLEGVWFVGDSKGDLEAALAVGAQPVLVKTGKGERTLEKGVPETTLIFDDLAAIARELI.

D7 functions as the Nucleophile in the catalytic mechanism. Mg(2+) contacts are provided by D7 and D9. Substrate is bound by residues 7-9, 15-19, and 50-53; these read DRD, DSDAY, and TNQS. The active-site Proton donor is the D9. Zn(2+) contacts are provided by C89, H91, C97, and C99. Substrate is bound at residue 100–101; that stretch reads RK. D126 provides a ligand contact to Mg(2+).

The protein belongs to the gmhB family. As to quaternary structure, monomer. Requires Mg(2+) as cofactor. Zn(2+) serves as cofactor.

Its subcellular location is the cytoplasm. It carries out the reaction D-glycero-beta-D-manno-heptose 1,7-bisphosphate + H2O = D-glycero-beta-D-manno-heptose 1-phosphate + phosphate. Its pathway is nucleotide-sugar biosynthesis; ADP-L-glycero-beta-D-manno-heptose biosynthesis; ADP-L-glycero-beta-D-manno-heptose from D-glycero-beta-D-manno-heptose 7-phosphate: step 2/4. It functions in the pathway bacterial outer membrane biogenesis; LPS core biosynthesis. Functionally, converts the D-glycero-beta-D-manno-heptose 1,7-bisphosphate (beta-HBP) intermediate into D-glycero-beta-D-manno-heptose 1-phosphate by removing the phosphate group at the C-7 position. In Pseudomonas putida (strain ATCC 47054 / DSM 6125 / CFBP 8728 / NCIMB 11950 / KT2440), this protein is D-glycero-beta-D-manno-heptose-1,7-bisphosphate 7-phosphatase.